The sequence spans 117 residues: Dolichyl-diphosphooligosaccharide--protein glycosyltransferase subunit DAD1 (117 aa).

Topologically, residues 1–33 are cytoplasmic; sequence MAKTSSTTKDAQDLFHAIWSAYSATPTNLKIID. Residues 34 to 54 traverse the membrane as a helical segment; sequence LYVVFAVFTALLQDVYMALVG. Residues 55-57 are Lumenal-facing; it reads PFP. A helical membrane pass occupies residues 58 to 78; that stretch reads FNSFLSGVLSCVGTAVLAVCL. At 79–96 the chain is on the cytoplasmic side; that stretch reads RIQVNKENKEFKDLGPER. A helical membrane pass occupies residues 97–117; the sequence is AFADFVLCNLVLHLVIMNFLG.

Belongs to the DAD/OST2 family. As to quaternary structure, component of the oligosaccharyltransferase (OST) complex.

The protein localises to the endoplasmic reticulum membrane. The protein operates within protein modification; protein glycosylation. In terms of biological role, subunit of the oligosaccharyl transferase (OST) complex that catalyzes the initial transfer of a defined glycan (Glc(3)Man(9)GlcNAc(2) in eukaryotes) from the lipid carrier dolichol-pyrophosphate to an asparagine residue within an Asn-X-Ser/Thr consensus motif in nascent polypeptide chains, the first step in protein N-glycosylation. N-glycosylation occurs cotranslationally and the complex associates with the Sec61 complex at the channel-forming translocon complex that mediates protein translocation across the endoplasmic reticulum (ER). All subunits are required for a maximal enzyme activity. This is Dolichyl-diphosphooligosaccharide--protein glycosyltransferase subunit DAD1 (DAD1) from Pisum sativum (Garden pea).